A 212-amino-acid chain; its full sequence is MAIGLIGRKVGMTRIFTEDGASIPVTVIEIAANRVTQVRTLETDGYRALQVTTGTKKANRITKPEAGHFAKAGVEAGRGLWEVRLADDEGEGIEVGAELNVDIFADVAKVDVTGQSKGKGFQGGIKRWNFHAQDMTHGNSLAHRSNGSIGQNQTPGRVFKGKKMSGHMGAERVTTQNLDVVRVDAERNLLLVKGAVPGATNGNLIIKPAVKA.

At glutamine 153 the chain carries N5-methylglutamine.

Belongs to the universal ribosomal protein uL3 family. In terms of assembly, part of the 50S ribosomal subunit. Forms a cluster with proteins L14 and L19. In terms of processing, methylated by PrmB.

Its function is as follows. One of the primary rRNA binding proteins, it binds directly near the 3'-end of the 23S rRNA, where it nucleates assembly of the 50S subunit. This Shewanella woodyi (strain ATCC 51908 / MS32) protein is Large ribosomal subunit protein uL3.